A 175-amino-acid chain; its full sequence is Large ribosomal subunit protein bL17 (175 aa).

The segment at 127–175 (GEAEAATKRAVKEDALKKDEAPAAESVEDAKPAEDAPAAEAADDKGKDA) is disordered. The segment covering 131 to 147 (AATKRAVKEDALKKDEA) has biased composition (basic and acidic residues).

This sequence belongs to the bacterial ribosomal protein bL17 family. Part of the 50S ribosomal subunit. Contacts protein L32.

This chain is Large ribosomal subunit protein bL17, found in Streptomyces griseus subsp. griseus (strain JCM 4626 / CBS 651.72 / NBRC 13350 / KCC S-0626 / ISP 5235).